The chain runs to 166 residues: Early E3 18.5 kDa glycoprotein (166 aa).

The N-terminal stretch at 1–19 (MGPILVLLVLLSLLEPGSA) is a signal peptide. Topologically, residues 20 to 131 (NYDPCLDFDP…SKDNIVTFSI (112 aa)) are lumenal. N-linked (GlcNAc...) asparagine; by host glycosylation is present at N31. 2 disulfides stabilise this stretch: C32/C50 and C44/C106. N-linked (GlcNAc...) asparagine; by host glycosylation is found at N63, N67, and N97. A helical membrane pass occupies residues 132-152 (AYCLCACLLTALLCVCIHLLV). At 153-166 (TTRIKNANNKEKMP) the chain is on the cytoplasmic side. A Di-lysine motif motif is present at residues 162 to 166 (KEKMP).

This sequence belongs to the adenoviridae E19 family. Both disulfide bonds are absolutely critical for the interaction with MHC antigens. Post-translationally, N-glycosylated; high-mannose.

Its subcellular location is the host endoplasmic reticulum membrane. Functionally, binds and retains class I heavy chains in the endoplasmic reticulum during the early period of virus infection, thereby impairing their transport to the cell surface. Also delays the expression of class I alleles that it cannot affect by direct retention. Binds transporters associated with antigen processing (TAP) and acts as a tapasin inhibitor, preventing class I/TAP association. In consequence, infected cells are masked for immune recognition by cytotoxic T-lymphocytes. The polypeptide is Early E3 18.5 kDa glycoprotein (Human adenovirus B serotype 11 (strain Slobiski) (HAdV-11)).